The sequence spans 605 residues: LysM domain receptor-like kinase 10 (605 aa).

Residues 1 to 20 form the signal peptide; the sequence is MFSLPALLIGACAFAAAAVA. At 21 to 245 the chain is on the extracellular side; it reads ASGDGCRAGC…GMGNSLSGGA (225 aa). 3 cysteine pairs are disulfide-bonded: Cys26–Cys89, Cys30–Cys161, and Cys87–Cys159. A glycan (N-linked (GlcNAc...) asparagine) is linked at Asn44. Residues 115 to 121 and 142 to 148 each bind chitin; these read GGDTYDA and PPGRIPG. 2 N-linked (GlcNAc...) asparagine glycosylation sites follow: Asn154 and Asn158. A LysM domain is found at 174 to 221; sequence LTYPLWDGETLESVAAQYGFSSPAEMELIRRYNPGMGGVSGKGIVFIP. Residue Asn226 is glycosylated (N-linked (GlcNAc...) asparagine). A helical transmembrane segment spans residues 246–266; the sequence is IAGIVIACIAIFIVAIWLIIM. Over 267–605 the chain is Cytoplasmic; the sequence is FYRWQKFRKA…DLRDMDYHPF (339 aa). Ser278 bears the Phosphoserine mark. One can recognise a Protein kinase domain in the interval 317-591; the sequence is FSMEHKIGQG…RSVVVALMAL (275 aa). ATP contacts are provided by residues 323 to 331 and Lys344; that span reads IGQGGFGSV. The active-site Proton acceptor is Asp436.

It belongs to the protein kinase superfamily. Ser/Thr protein kinase family.

The protein resides in the cell membrane. The catalysed reaction is L-seryl-[protein] + ATP = O-phospho-L-seryl-[protein] + ADP + H(+). The enzyme catalyses L-threonyl-[protein] + ATP = O-phospho-L-threonyl-[protein] + ADP + H(+). This is LysM domain receptor-like kinase 10 from Oryza sativa subsp. japonica (Rice).